Reading from the N-terminus, the 721-residue chain is Xylosyl- and glucuronyltransferase LARGE2 (721 aa).

Residues 1–8 (MLPRGRPR) lie on the Cytoplasmic side of the membrane. A helical; Signal-anchor for type II membrane protein transmembrane segment spans residues 9 to 29 (ALGAAALLLLLLLLGFLLFGG). Residues 30 to 721 (DLGCERREPG…LQQPQSPARG (692 aa)) lie on the Lumenal side of the membrane. Positions 59 to 89 (DGRLRRAAALDGDPGAGPGDHNRSDCGPQPP) are disordered. N-linked (GlcNAc...) asparagine glycosylation is found at Asn80 and Asn107. Positions 97–372 (LHVAIVCAGH…FLEYDGNLLR (276 aa)) are xylosyltransferase activity. The Mn(2+) site is built by Asp201 and Asp203. N-linked (GlcNAc...) asparagine glycosylation is present at Asn231. Residues 373-715 (RELFVCPSQP…LKYLPALQQP (343 aa)) form a glucuronyltransferase activity region. Mn(2+) contacts are provided by Asp521 and Asp523.

This sequence in the C-terminal section; belongs to the glycosyltransferase 49 family. The protein in the N-terminal section; belongs to the glycosyltransferase 8 family. As to quaternary structure, interacts with B4GAT1. Mn(2+) serves as cofactor. In terms of tissue distribution, widely expressed. Expressed at high level in placenta, pancreas and kidney compared to LARGE. Not expressed in brain.

It is found in the golgi apparatus membrane. The enzyme catalyses 3-O-[beta-D-GlcA-(1-&gt;3)-beta-D-Xyl-(1-&gt;4)-Rib-ol-P-Rib-ol-P-3-beta-D-GalNAc-(1-&gt;3)-beta-D-GlcNAc-(1-&gt;4)-(O-6-P-alpha-D-Man)]-Thr-[protein] + UDP-alpha-D-xylose = 3-O-[alpha-D-Xyl-(1-&gt;3)-beta-D-GlcA-(1-&gt;4)-beta-D-Xyl-(1-&gt;4)-Rib-ol-P-Rib-ol-P-3-beta-D-GalNAc-(1-&gt;3)-beta-D-GlcNAc-(1-&gt;4)-(O-6-P-alpha-D-Man)]-Thr-[protein] + UDP + H(+). The catalysed reaction is 3-O-{(1-&gt;[3)-alpha-D-Xyl-(1-&gt;3)-beta-D-GlcA-(1-&gt;](n)-4)-beta-D-Xyl-(1-&gt;4)-Rib-ol-P-Rib-ol-P-3-beta-D-GalNAc-(1-&gt;3)-beta-D-GlcNAc-(1-&gt;4)-O-6-P-alpha-D-Man}-L-Thr-[protein] + UDP-alpha-D-glucuronate = 3-O-{beta-D-GlcA-(1-&gt;[3)-alpha-D-Xyl-(1-&gt;3)-beta-D-GlcA-(1-&gt;](n)-4)-beta-D-Xyl-(1-&gt;4)-Rib-ol-P-Rib-ol-P-3-beta-D-GalNAc-(1-&gt;3)-beta-D-GlcNAc-(1-&gt;4)-O-6-P-alpha-D-Man}-L-Thr-[protein] + UDP + H(+). It catalyses the reaction 3-O-{beta-D-GlcA-(1-&gt;[3)-alpha-D-Xyl-(1-&gt;3)-beta-D-GlcA-(1-&gt;](n)-4)-beta-D-Xyl-(1-&gt;4)-Rib-ol-P-Rib-ol-P-3-beta-D-GalNAc-(1-&gt;3)-beta-D-GlcNAc-(1-&gt;4)-O-6-P-alpha-D-Man}-L-Thr-[protein] + UDP-alpha-D-xylose = 3-O-{(1-&gt;[3)-alpha-D-Xyl-(1-&gt;3)-beta-D-GlcA-(1-&gt;](n+1)-4)-beta-D-Xyl-(1-&gt;4)-Rib-ol-P-Rib-ol-P-3-beta-D-GalNAc-(1-&gt;3)-beta-D-GlcNAc-(1-&gt;4)-O-6-P-alpha-D-Man}-L-Thr-[protein] + UDP + H(+). It participates in protein modification; protein glycosylation. Bifunctional glycosyltransferase with both alpha-1,3-xylosyltransferase and beta-1,3-glucuronyltransferase activities involved in the maturation of alpha-dystroglycan (DAG1) by glycosylation leading to DAG1 binding to laminin G-like domain-containing extracellular proteins with high affinity and in a phosphorylated-O-mannosyl trisaccharide dependent manner. Elongates the glucuronyl-beta-1,4-xylose-beta disaccharide primer structure by adding repeating units [-3-Xylose-alpha-1,3-GlcA-beta-1-] to produce a heteropolysaccharide. Supports the maturation of DAG1 more effectively than LARGE1. In addition, can modify both heparan sulfate (HS)- and chondroitin/dermatan sulfate (CS/DS)-proteoglycans (PGs), namely GPC4, with a glycosaminoglycan (GAG)-like polysaccharide composed of xylose and glucuronic acid to confer laminin binding. The polypeptide is Xylosyl- and glucuronyltransferase LARGE2 (Homo sapiens (Human)).